A 343-amino-acid chain; its full sequence is ATPase GET3 (343 aa).

ATP is bound at residue 32-39; it reads KGGVGKTT. Aspartate 61 is a catalytic residue. ATP contacts are provided by glutamate 245 and asparagine 272. Zn(2+)-binding residues include cysteine 283 and cysteine 286.

This sequence belongs to the arsA ATPase family. Homodimer.

The protein resides in the cytoplasm. It localises to the endoplasmic reticulum. Functionally, ATPase required for the post-translational delivery of tail-anchored (TA) proteins to the endoplasmic reticulum. Recognizes and selectively binds the transmembrane domain of TA proteins in the cytosol. This complex then targets to the endoplasmic reticulum by membrane-bound receptors, where the tail-anchored protein is released for insertion. This process is regulated by ATP binding and hydrolysis. ATP binding drives the homodimer towards the closed dimer state, facilitating recognition of newly synthesized TA membrane proteins. ATP hydrolysis is required for insertion. Subsequently, the homodimer reverts towards the open dimer state, lowering its affinity for the membrane-bound receptor, and returning it to the cytosol to initiate a new round of targeting. The protein is ATPase GET3 of Pyricularia oryzae (strain 70-15 / ATCC MYA-4617 / FGSC 8958) (Rice blast fungus).